Here is a 525-residue protein sequence, read N- to C-terminus: Ribosomal protein S6 kinase beta-1 (525 aa).

Residues 1–54 are disordered; sequence MRRRRRRDGFYPAPDFRDREAEDMAGVFDIDLDQPEDAGSEDELEEGGQLNESM. The TOS motif signature appears at 28–32; sequence FDIDL. Over residues 30–46 the composition is skewed to acidic residues; that stretch reads IDLDQPEDAGSEDELEE. Residues 91-352 form the Protein kinase domain; it reads FELLRVLGKG…AGEVQAHPFF (262 aa). ATP-binding positions include 97–105 and Lys-123; that span reads LGKGGYGKV. Catalysis depends on Asp-218, which acts as the Proton acceptor. Residue Thr-252 is modified to Phosphothreonine; by PDPK1. The region spanning 353 to 423 is the AGC-kinase C-terminal domain; that stretch reads RHINWEELLA…VAPSVLESVK (71 aa). The segment at 380–399 is disordered; the sequence is SQFDSKFTRQTPVDSPDDST. Positions 381–399 are enriched in polar residues; that stretch reads QFDSKFTRQTPVDSPDDST. Ser-394 carries the post-translational modification Phosphoserine. The residue at position 412 (Thr-412) is a Phosphothreonine; by MTOR, NEK6 and NEK7. The interval 424 to 525 is autoinhibitory domain; it reads EKFSFEPKIR…KRPEHLRMNL (102 aa). 2 positions are modified to phosphoserine: Ser-434 and Ser-441. Position 444 is a phosphothreonine (Thr-444). Ser-447 and Ser-452 each carry phosphoserine. The segment at 486-509 is disordered; that stretch reads VTTSGEASAPLPIRQPNSGPYKKQ. Residue Lys-516 is modified to N6-acetyllysine.

It belongs to the protein kinase superfamily. AGC Ser/Thr protein kinase family. S6 kinase subfamily. In terms of assembly, interacts with PPP1R9A/neurabin-1. Interacts with RPTOR. Interacts with IRS1. Interacts with EIF3B and EIF3C. Interacts with TRAF4. Interacts with POLDIP3. Interacts (via N-terminus) with IER5. Post-translationally, phosphorylation at Thr-412 is regulated by mTORC1. The phosphorylation at this site is maintained by an agonist-dependent autophosphorylation mechanism. Activated by phosphorylation at Thr-252 by PDPK1. Dephosphorylation by PPP1CC at Thr-412 in mitochondrion.

The protein resides in the cytoplasm. The protein localises to the synapse. It localises to the synaptosome. It is found in the mitochondrion outer membrane. Its subcellular location is the mitochondrion. It catalyses the reaction L-seryl-[protein] + ATP = O-phospho-L-seryl-[protein] + ADP + H(+). It carries out the reaction L-threonyl-[protein] + ATP = O-phospho-L-threonyl-[protein] + ADP + H(+). Its activity is regulated as follows. Activation requires multiple phosphorylation events on serine/threonine residues. Activation appears to be first mediated by phosphorylation of multiple sites in the autoinhibitory domain, which facilitates phosphorylation at Thr-412, disrupting the autoinhibitory mechanism and allowing phosphorylation of Thr-252 by PDPK1. The active conformation of the kinase is believed to be stabilized by a mechanism involving three conserved phosphorylation sites located in the kinase domain activation loop (Thr-252) and in the AGC-kinase C-terminal domain (Ser-394 in the middle of the tail/linker region and Thr-412 within a hydrophobic motif at its end). Activated by mTORC1; isoform Alpha I and isoform Alpha II are sensitive to rapamycin, which inhibits activating phosphorylation at Thr-412. Activated by PDPK1. In terms of biological role, serine/threonine-protein kinase that acts downstream of mTOR signaling in response to growth factors and nutrients to promote cell proliferation, cell growth and cell cycle progression. Regulates protein synthesis through phosphorylation of EIF4B, RPS6 and EEF2K, and contributes to cell survival by repressing the pro-apoptotic function of BAD. Under conditions of nutrient depletion, the inactive form associates with the EIF3 translation initiation complex. Upon mitogenic stimulation, phosphorylation by the mechanistic target of rapamycin complex 1 (mTORC1) leads to dissociation from the EIF3 complex and activation. The active form then phosphorylates and activates several substrates in the pre-initiation complex, including the EIF2B complex and the cap-binding complex component EIF4B. Also controls translation initiation by phosphorylating a negative regulator of EIF4A, PDCD4, targeting it for ubiquitination and subsequent proteolysis. Promotes initiation of the pioneer round of protein synthesis by phosphorylating POLDIP3/SKAR. In response to IGF1, activates translation elongation by phosphorylating EEF2 kinase (EEF2K), which leads to its inhibition and thus activation of EEF2. Also plays a role in feedback regulation of mTORC2 by mTORC1 by phosphorylating MAPKAP1/SIN1, MTOR and RICTOR, resulting in the inhibition of mTORC2 and AKT1 signaling. Also involved in feedback regulation of mTORC1 and mTORC2 by phosphorylating DEPTOR. Mediates cell survival by phosphorylating the pro-apoptotic protein BAD and suppressing its pro-apoptotic function. Phosphorylates mitochondrial URI1 leading to dissociation of a URI1-PPP1CC complex. The free mitochondrial PPP1CC can then dephosphorylate RPS6KB1 at Thr-412, which is proposed to be a negative feedback mechanism for the RPS6KB1 anti-apoptotic function. Mediates TNF-alpha-induced insulin resistance by phosphorylating IRS1 at multiple serine residues, resulting in accelerated degradation of IRS1. In cells lacking functional TSC1-2 complex, constitutively phosphorylates and inhibits GSK3B. May be involved in cytoskeletal rearrangement through binding to neurabin. Phosphorylates and activates the pyrimidine biosynthesis enzyme CAD, downstream of MTOR. Following activation by mTORC1, phosphorylates EPRS and thereby plays a key role in fatty acid uptake by adipocytes and also most probably in interferon-gamma-induced translation inhibition. The chain is Ribosomal protein S6 kinase beta-1 (RPS6KB1) from Oryctolagus cuniculus (Rabbit).